Consider the following 450-residue polypeptide: Glucose-6-phosphate isomerase (450 aa).

The active-site Proton donor is E290. Active-site residues include H311 and K425.

This sequence belongs to the GPI family.

The protein resides in the cytoplasm. The enzyme catalyses alpha-D-glucose 6-phosphate = beta-D-fructose 6-phosphate. The protein operates within carbohydrate biosynthesis; gluconeogenesis. It functions in the pathway carbohydrate degradation; glycolysis; D-glyceraldehyde 3-phosphate and glycerone phosphate from D-glucose: step 2/4. Catalyzes the reversible isomerization of glucose-6-phosphate to fructose-6-phosphate. The polypeptide is Glucose-6-phosphate isomerase (Lactiplantibacillus plantarum (strain ATCC BAA-793 / NCIMB 8826 / WCFS1) (Lactobacillus plantarum)).